A 326-amino-acid polypeptide reads, in one-letter code: Polyprenal reductase (326 aa).

Transmembrane regions (helical) follow at residues 26 to 46 (MMFG…TFVE), 84 to 104 (HFYT…VSTV), 167 to 187 (INLS…IALL), 212 to 232 (ILYL…NMIL), and 256 to 276 (LFNL…FCIA).

It belongs to the steroid 5-alpha reductase family. Polyprenal reductase subfamily.

The protein localises to the endoplasmic reticulum membrane. The enzyme catalyses a di-trans,poly-cis-dolichal + NADP(+) = a di-trans,poly-cis-polyprenal + NADPH + H(+). It participates in protein modification; protein glycosylation. In terms of biological role, plays a key role in early steps of protein N-linked glycosylation by being involved in the conversion of polyprenol into dolichol. Acts as a polyprenal reductase that mediates the reduction of polyprenal into dolichal in a NADP-dependent mechanism. Dolichols are required for the synthesis of dolichol-linked monosaccharides and the oligosaccharide precursor used for N-glycosylation. This is Polyprenal reductase from Drosophila melanogaster (Fruit fly).